The primary structure comprises 298 residues: GTPase Era (298 aa).

Positions 3–170 (KSGFVAILGR…IKLLTDNLEE (168 aa)) constitute an Era-type G domain. The G1 stretch occupies residues 11–18 (GRPNVGKS). 11-18 (GRPNVGKS) lines the GTP pocket. The segment at 37–41 (QTTRN) is G2. The segment at 58–61 (DTPG) is G3. Residues 58 to 62 (DTPGI) and 120 to 123 (NKID) each bind GTP. The G4 stretch occupies residues 120 to 123 (NKID). Positions 149-151 (ISA) are G5. The 79-residue stretch at 201-279 (TQQEVPHSVA…YLETWVKVKK (79 aa)) folds into the KH type-2 domain.

Belongs to the TRAFAC class TrmE-Era-EngA-EngB-Septin-like GTPase superfamily. Era GTPase family. In terms of assembly, monomer.

The protein localises to the cytoplasm. The protein resides in the cell membrane. An essential GTPase that binds both GDP and GTP, with rapid nucleotide exchange. Plays a role in 16S rRNA processing and 30S ribosomal subunit biogenesis and possibly also in cell cycle regulation and energy metabolism. This is GTPase Era from Streptococcus pyogenes serotype M4 (strain MGAS10750).